The sequence spans 261 residues: tRNA pseudouridine synthase A (261 aa).

Aspartate 51 (nucleophile) is an active-site residue. Substrate is bound at residue tyrosine 109.

It belongs to the tRNA pseudouridine synthase TruA family. Homodimer.

It carries out the reaction uridine(38/39/40) in tRNA = pseudouridine(38/39/40) in tRNA. Functionally, formation of pseudouridine at positions 38, 39 and 40 in the anticodon stem and loop of transfer RNAs. This chain is tRNA pseudouridine synthase A, found in Shewanella baltica (strain OS223).